The chain runs to 76 residues: Large ribosomal subunit protein uL24 (76 aa).

It belongs to the universal ribosomal protein uL24 family. As to quaternary structure, part of the 50S ribosomal subunit.

Its function is as follows. One of two assembly initiator proteins, it binds directly to the 5'-end of the 23S rRNA, where it nucleates assembly of the 50S subunit. In terms of biological role, one of the proteins that surrounds the polypeptide exit tunnel on the outside of the subunit. The sequence is that of Large ribosomal subunit protein uL24 from Sulfurimonas denitrificans (strain ATCC 33889 / DSM 1251) (Thiomicrospira denitrificans (strain ATCC 33889 / DSM 1251)).